We begin with the raw amino-acid sequence, 73 residues long: MKISCFLLMIFFLSCFQINPVAVLDTIKCLQGNNNCHIQKCPWFLLQVSTCYKGKGRCCQKRRWFARSHVYHV.

A signal peptide spans 1–23; it reads MKISCFLLMIFFLSCFQINPVAV. Intrachain disulfides connect cysteine 29–cysteine 58, cysteine 36–cysteine 51, and cysteine 41–cysteine 59.

Belongs to the beta-defensin family. Only expressed in epididymis (corpus, cauda and caput).

It localises to the secreted. In terms of biological role, has antibacterial activity. This chain is Beta-defensin 40 (Defb40), found in Mus musculus (Mouse).